The chain runs to 1143 residues: Major DNA-binding protein (1143 aa).

The segment at 1140 to 1143 (RMRL) is required for nuclear localization.

It belongs to the herpesviridae major DNA-binding protein family. Homooligomers. Forms double-helical filaments necessary for the formation of replication compartments within the host nucleus. Interacts with the origin-binding protein. Interacts with the helicase primase complex; this interaction stimulates primer synthesis activity of the helicase-primase complex. Interacts with the DNA polymerase. Interacts with the alkaline exonuclease; this interaction increases its nuclease processivity.

The protein localises to the host nucleus. In terms of biological role, plays several crucial roles in viral infection. Participates in the opening of the viral DNA origin to initiate replication by interacting with the origin-binding protein. May disrupt loops, hairpins and other secondary structures present on ssDNA to reduce and eliminate pausing of viral DNA polymerase at specific sites during elongation. Promotes viral DNA recombination by performing strand-transfer, characterized by the ability to transfer a DNA strand from a linear duplex to a complementary single-stranded DNA circle. Can also catalyze the renaturation of complementary single strands. Additionally, reorganizes the host cell nucleus, leading to the formation of prereplicative sites and replication compartments. This process is driven by the protein which can form double-helical filaments in the absence of DNA. The polypeptide is Major DNA-binding protein (Elephantid herpesvirus 1 (isolate Asian elephant/Berlin/Kiba/1998) (EIHV-1)).